Consider the following 1194-residue polypeptide: Immunoglobulin superfamily member 3 (1194 aa).

An N-terminal signal peptide occupies residues 1 to 19 (MKCFFPVLSCLAVLGVVSA). Ig-like C2-type domains are found at residues 20-138 (QRQV…AKMN), 143-262 (PDSL…WYAM), 276-386 (PTDK…KTVT), 401-539 (PIVV…VSIT), 545-661 (FAVT…WTRL), 676-803 (PVTK…EEVS), 813-945 (PDSR…TAVT), and 949-1097 (PDAA…YRLT). Residues 20–1124 (QRQVTVQEGP…LQSLICSNDA (1105 aa)) are Extracellular-facing. 2 cysteine pairs are disulfide-bonded: Cys-42-Cys-120 and Cys-167-Cys-246. Residue Asn-43 is glycosylated (N-linked (GlcNAc...) asparagine). Positions 250–252 (EWI) match the EWI motif motif. Residues Cys-302 and Cys-376 are joined by a disulfide bond. Residue Asn-418 is glycosylated (N-linked (GlcNAc...) asparagine). Disulfide bonds link Cys-432–Cys-511, Cys-566–Cys-645, Cys-701–Cys-782, Cys-838–Cys-918, and Cys-974–Cys-1080. A glycan (N-linked (GlcNAc...) asparagine) is linked at Asn-842. A disordered region spans residues 997–1030 (GGGKRGSLGIDEQEEEEEEEDISQEEDSEDPTER). Acidic residues predominate over residues 1007-1026 (DEQEEEEEEEDISQEEDSED). Asn-1077 carries N-linked (GlcNAc...) asparagine glycosylation. Residues 1125 to 1145 (LFYFVFFYPFPIFGILIITIL) form a helical membrane-spanning segment. The Cytoplasmic segment spans residues 1146 to 1194 (LVRFKSRNSSKNSEGKNGVPLLWIKEPHLNYSPTCLEPPVLSIHPGAID).

Expressed in the lacrimal duct and lacrimal gland.

It localises to the membrane. The chain is Immunoglobulin superfamily member 3 (Igsf3) from Mus musculus (Mouse).